The chain runs to 540 residues: Protein PALS2 (540 aa).

2 L27 domains span residues 1 to 48 and 49 to 107; these read MQQV…EDSK and LEAV…YDSP. One can recognise a PDZ domain in the interval 130–209; sequence ILGIHKRAGE…SVTLKILPSY (80 aa). In terms of domain architecture, SH3 spans 215 to 284; the sequence is PQQVFVKCHF…PSQFLEEKRK (70 aa). The Guanylate kinase-like domain maps to 338-525; it reads RKTLVLIGAQ…AFEKLQTAIE (188 aa). A Phosphotyrosine modification is found at tyrosine 500.

This sequence belongs to the MAGUK family. Interacts with CADM1. Interacts with the LIN7 proteins. As to expression, abundant in testis, brain, and kidney with lower levels detectable in other tissues.

Its subcellular location is the membrane. The polypeptide is Protein PALS2 (Homo sapiens (Human)).